The chain runs to 379 residues: Cytochrome b (379 aa).

Transmembrane regions (helical) follow at residues 34 to 54 (FGSLLGICLITQILTGLLLAM), 78 to 99 (WLIRNLHANGASFFFICIYFHI), 114 to 134 (WNTGIILLLTLMATAFVGYVL), and 179 to 199 (FFALHFLLPFLIAGITLIHLT). Residues His-84 and His-98 each contribute to the heme b site. His-183 and His-197 together coordinate heme b. His-202 is an a ubiquinone binding site. A run of 4 helical transmembrane segments spans residues 227–247 (LKDILGFTLMLIPLLTLTFFS), 289–309 (LGGVLALAASVLILFLTPLLH), 321–341 (FSQVLFWLLVANLLILTWVGS), and 348–368 (FIAIGQMASFTYFLILLVLFP).

It belongs to the cytochrome b family. As to quaternary structure, the cytochrome bc1 complex contains 11 subunits: 3 respiratory subunits (MT-CYB, CYC1 and UQCRFS1), 2 core proteins (UQCRC1 and UQCRC2) and 6 low-molecular weight proteins (UQCRH/QCR6, UQCRB/QCR7, UQCRQ/QCR8, UQCR10/QCR9, UQCR11/QCR10 and a cleavage product of UQCRFS1). This cytochrome bc1 complex then forms a dimer. Requires heme b as cofactor.

Its subcellular location is the mitochondrion inner membrane. Component of the ubiquinol-cytochrome c reductase complex (complex III or cytochrome b-c1 complex) that is part of the mitochondrial respiratory chain. The b-c1 complex mediates electron transfer from ubiquinol to cytochrome c. Contributes to the generation of a proton gradient across the mitochondrial membrane that is then used for ATP synthesis. This chain is Cytochrome b (MT-CYB), found in Apteryx australis (Southern brown kiwi).